The primary structure comprises 89 residues: MALTAEQKKEILGTYGLHDTDTGSPEAQVALLTKRIADLTEHLKVHKHDHHSRRGLLLLVGRRRRLLKYVAQIDVERYRSLVERLGLRR.

The protein belongs to the universal ribosomal protein uS15 family. Part of the 30S ribosomal subunit. Forms a bridge to the 50S subunit in the 70S ribosome, contacting the 23S rRNA.

Its function is as follows. One of the primary rRNA binding proteins, it binds directly to 16S rRNA where it helps nucleate assembly of the platform of the 30S subunit by binding and bridging several RNA helices of the 16S rRNA. Forms an intersubunit bridge (bridge B4) with the 23S rRNA of the 50S subunit in the ribosome. The chain is Small ribosomal subunit protein uS15 from Mycobacterium avium (strain 104).